Here is a 95-residue protein sequence, read N- to C-terminus: Acylphosphatase (95 aa).

One can recognise an Acylphosphatase-like domain in the interval 7–94; sequence AALVRITGRV…EAPAGFRITR (88 aa). Catalysis depends on residues Arg-22 and Asn-40. Residues 76–88 show a composition bias toward low complexity; sequence VASEEASSAEAPA. Residues 76–95 are disordered; sequence VASEEASSAEAPAGFRITRG.

The protein belongs to the acylphosphatase family.

The enzyme catalyses an acyl phosphate + H2O = a carboxylate + phosphate + H(+). The protein is Acylphosphatase (acyP) of Rhizobium meliloti (strain 1021) (Ensifer meliloti).